Here is a 1225-residue protein sequence, read N- to C-terminus: NHS-like protein 2 (1225 aa).

Disordered stretches follow at residues 161 to 180, 193 to 213, 291 to 371, 466 to 510, 543 to 632, 670 to 766, 812 to 1009, 1042 to 1093, and 1128 to 1203; these read TFRS…PQSA, QLSE…SLSL, NFSQ…ESMG, HMPE…TTDV, LSAQ…PEST, QGSS…KFPK, KTNP…KKPS, DTKC…DKTA, and KEPG…KTTN. Composition is skewed to polar residues over residues 291–315 and 339–350; these read NFSQ…TSDI and SLTSPVLRTPSS. Ser-500 is modified (phosphoserine). Basic residues predominate over residues 552-568; sequence RRQRSKSISLRKAKKKP. Phosphoserine is present on Ser-576. Residues 675 to 688 show a composition bias toward low complexity; sequence SLASPSTSRATTPS. A Phosphoserine modification is found at Ser-691. Composition is skewed to polar residues over residues 710–730 and 812–827; these read SPSS…SMSL and KTNP…TQSD. Acidic residues predominate over residues 841 to 851; sequence PEDDIESPEYA. Positions 852-867 are enriched in basic and acidic residues; sequence EEPRAEEVFTLPERKT. Polar residues-rich tracts occupy residues 939–968 and 1054–1065; these read GEST…QPPQ and SLGQRVTSTPQA. Ser-1054 carries the phosphoserine modification. A compositionally biased stretch (basic and acidic residues) spans 1082-1093; it reads TEEKSLISDKTA. Positions 1138–1155 are enriched in polar residues; the sequence is RTSSHSPIKNTAESPISE. The span at 1156–1166 shows a compositional bias: low complexity; that stretch reads STATAGSGSSA.

Belongs to the NHS family.

This is NHS-like protein 2 from Homo sapiens (Human).